The chain runs to 482 residues: Ribosomal protein uS12 methylthiotransferase RimO (482 aa).

Positions 2–115 (MKVHIITLGC…IAEVVETFQP (114 aa)) constitute an MTTase N-terminal domain. Cys-11, Cys-47, Cys-79, Cys-177, Cys-181, and Cys-184 together coordinate [4Fe-4S] cluster. A Radical SAM core domain is found at 163-394 (RAVGPSAYLK…MRLQQRISRE (232 aa)). The TRAM domain occupies 397–466 (RRWLGRVVRV…DYDLWGDVVG (70 aa)).

It belongs to the methylthiotransferase family. RimO subfamily. The cofactor is [4Fe-4S] cluster.

The protein resides in the cytoplasm. It catalyses the reaction L-aspartate(89)-[ribosomal protein uS12]-hydrogen + (sulfur carrier)-SH + AH2 + 2 S-adenosyl-L-methionine = 3-methylsulfanyl-L-aspartate(89)-[ribosomal protein uS12]-hydrogen + (sulfur carrier)-H + 5'-deoxyadenosine + L-methionine + A + S-adenosyl-L-homocysteine + 2 H(+). Catalyzes the methylthiolation of an aspartic acid residue of ribosomal protein uS12. In Roseiflexus castenholzii (strain DSM 13941 / HLO8), this protein is Ribosomal protein uS12 methylthiotransferase RimO.